The sequence spans 433 residues: ATP-dependent protease ATPase subunit HslU (433 aa).

Residues Val-18, 60–65 (GVGKTE), Asp-246, Glu-311, and Arg-383 contribute to the ATP site.

The protein belongs to the ClpX chaperone family. HslU subfamily. A double ring-shaped homohexamer of HslV is capped on each side by a ring-shaped HslU homohexamer. The assembly of the HslU/HslV complex is dependent on binding of ATP.

Its subcellular location is the cytoplasm. In terms of biological role, ATPase subunit of a proteasome-like degradation complex; this subunit has chaperone activity. The binding of ATP and its subsequent hydrolysis by HslU are essential for unfolding of protein substrates subsequently hydrolyzed by HslV. HslU recognizes the N-terminal part of its protein substrates and unfolds these before they are guided to HslV for hydrolysis. This chain is ATP-dependent protease ATPase subunit HslU, found in Rhodopseudomonas palustris (strain BisB5).